The following is an 842-amino-acid chain: Protein P (842 aa).

Residues 1–177 are terminal protein domain (TP); that stretch reads MPLSYQHFRR…FCGSPYSWEQ (177 aa). The spacer stretch occupies residues 178 to 345; sequence ELHHGAFLDG…YCLTHLVNLL (168 aa). The disordered stretch occupies residues 205-271; it reads SRPPVGSSIQ…RHAKNIASRP (67 aa). The span at 223–239 shows a compositional bias: polar residues; sequence GPQSQQRPLDGSQQGRS. A polymerase/reverse transcriptase domain (RT) region spans residues 346 to 689; that stretch reads EDWGPCTEHG…YLNLYPVARQ (344 aa). Residues 356 to 599 enclose the Reverse transcriptase domain; it reads KHHIRIPRTP…YSLNFMGYVI (244 aa). Positions 428, 550, and 551 each coordinate Mg(2+).

It belongs to the hepadnaviridae P protein family.

It catalyses the reaction DNA(n) + a 2'-deoxyribonucleoside 5'-triphosphate = DNA(n+1) + diphosphate. It carries out the reaction Endonucleolytic cleavage to 5'-phosphomonoester.. Its activity is regulated as follows. Activated by host HSP70 and HSP40 in vitro to be able to bind the epsilon loop of the pgRNA. Because deletion of the RNase H region renders the protein partly chaperone-independent, the chaperones may be needed indirectly to relieve occlusion of the RNA-binding site by this domain. Inhibited by several reverse-transcriptase inhibitors: Lamivudine, Adefovir and Entecavir. Its function is as follows. Multifunctional enzyme that converts the viral RNA genome into dsDNA in viral cytoplasmic capsids. This enzyme displays a DNA polymerase activity that can copy either DNA or RNA templates, and a ribonuclease H (RNase H) activity that cleaves the RNA strand of RNA-DNA heteroduplexes in a partially processive 3'- to 5'-endonucleasic mode. Neo-synthesized pregenomic RNA (pgRNA) are encapsidated together with the P protein, and reverse-transcribed inside the nucleocapsid. Initiation of reverse-transcription occurs first by binding the epsilon loop on the pgRNA genome, and is initiated by protein priming, thereby the 5'-end of (-)DNA is covalently linked to P protein. Partial (+)DNA is synthesized from the (-)DNA template and generates the relaxed circular DNA (RC-DNA) genome. After budding and infection, the RC-DNA migrates in the nucleus, and is converted into a plasmid-like covalently closed circular DNA (cccDNA). The activity of P protein does not seem to be necessary for cccDNA generation, and is presumably released from (+)DNA by host nuclear DNA repair machinery. The sequence is that of Protein P from Hepatitis B virus genotype E subtype ayw4 (isolate Kou) (HBV-E).